A 188-amino-acid polypeptide reads, in one-letter code: Large ribosomal subunit protein uL5 (188 aa).

The protein belongs to the universal ribosomal protein uL5 family. As to quaternary structure, part of the 50S ribosomal subunit; contacts the 5S rRNA and probably tRNA. Forms a bridge to the 30S subunit in the 70S ribosome.

Its function is as follows. This is one of the proteins that bind and probably mediate the attachment of the 5S RNA into the large ribosomal subunit, where it forms part of the central protuberance. In the 70S ribosome it contacts protein S13 of the 30S subunit (bridge B1b), connecting the 2 subunits; this bridge is implicated in subunit movement. May contact the P site tRNA; the 5S rRNA and some of its associated proteins might help stabilize positioning of ribosome-bound tRNAs. This is Large ribosomal subunit protein uL5 from Pyrococcus horikoshii (strain ATCC 700860 / DSM 12428 / JCM 9974 / NBRC 100139 / OT-3).